The chain runs to 401 residues: Protein IQ-DOMAIN 24 (401 aa).

The interval 1 to 48 (MGFFGRLFGSKKQEKATPNRRRWSFATRSSHPENDSSSHSSKRRGDED) is disordered. A calmodulin-binding region spans residues 105-121 (EYKAAMKIQSAFRGYLA). 2 consecutive IQ domains span residues 105–133 (EYKAAMKIQSAFRGYLARRALRALKALVK) and 134–156 (LQALVKGHIVRKQTADMLRRMQT). 2 stretches are compositionally biased toward low complexity: residues 165–176 (RASRSSHVSDSS) and 278–287 (RSRTGSSSGG). Disordered stretches follow at residues 165–186 (RASRSSHVSDSSHPPTLMIPSS) and 258–296 (SPRKRGSLVVPTSVENSPQLRSRTGSSSGGSRRKTPFTP).

It belongs to the IQD family. Binds to multiple calmodulin (CaM) in the presence of Ca(2+) and CaM-like proteins.

It localises to the nucleus. The protein resides in the nuclear body. The protein localises to the cell membrane. Its function is as follows. May be involved in cooperative interactions with calmodulins or calmodulin-like proteins. Recruits calmodulin proteins to microtubules, thus being a potential scaffold in cellular signaling and trafficking. May associate with nucleic acids and regulate gene expression at the transcriptional or post-transcriptional level. The protein is Protein IQ-DOMAIN 24 of Arabidopsis thaliana (Mouse-ear cress).